Reading from the N-terminus, the 91-residue chain is UPF0728 protein v1g117062 (91 aa).

The protein belongs to the UPF0728 family.

The polypeptide is UPF0728 protein v1g117062 (Nematostella vectensis (Starlet sea anemone)).